A 1434-amino-acid polypeptide reads, in one-letter code: Pleiotropic drug resistance protein 1 (1434 aa).

Residues 1–22 (MEPANLSNLRGSSLRGSTRGSL) are disordered. One can recognise an ABC transporter 1 domain in the interval 161-434 (LNSLHILSSR…FESMGFKCPQ (274 aa)). Residue 194 to 201 (GPPSSGKT) participates in ATP binding. In terms of domain architecture, ABC transmembrane type-2 1 spans 512–725 (ELLKVCTERE…SVNSILVNEF (214 aa)). 7 helical membrane passes run 530 to 550 (FVYM…MTLF), 563 to 583 (GGIY…NGMS), 618 to 638 (IPVT…VIGF), 649 to 669 (FLLL…IGAV), 675 to 695 (VAST…GFVL), 702 to 722 (SWWI…SILV), and 760 to 780 (IGVG…SLAL). The segment at 793 to 824 (LPEDGENAENGEVSSQITSTDGGDSISESQNN) is disordered. The segment covering 804–824 (EVSSQITSTDGGDSISESQNN) has biased composition (polar residues). The ABC transporter 2 domain maps to 837–1089 (ITFDDVVYSV…HLIKYFESNP (253 aa)). 882-889 (GVSGAGKT) provides a ligand contact to ATP. Residues 1162–1376 (TQCVACLWKQ…TLYGLVASQF (215 aa)) enclose the ABC transmembrane type-2 2 domain. A run of 7 helical transmembrane segments spans residues 1181 to 1201 (YTAV…TMFW), 1221 to 1241 (YAAV…VVAI), 1269 to 1289 (IPYI…MIGF), 1296 to 1316 (FFWY…YGMM), 1326 to 1346 (VASI…GFII), 1357 to 1377 (WYYW…SQFG), and 1406 to 1426 (VVAA…AFAI).

This sequence belongs to the ABC transporter superfamily. ABCG family. PDR (TC 3.A.1.205) subfamily.

The protein localises to the membrane. In terms of biological role, may be a general defense protein. This chain is Pleiotropic drug resistance protein 1 (PDR1), found in Nicotiana tabacum (Common tobacco).